The chain runs to 156 residues: Small ribosomal subunit protein uS7 (156 aa).

This sequence belongs to the universal ribosomal protein uS7 family. Part of the 30S ribosomal subunit. Contacts proteins S9 and S11.

One of the primary rRNA binding proteins, it binds directly to 16S rRNA where it nucleates assembly of the head domain of the 30S subunit. Is located at the subunit interface close to the decoding center, probably blocks exit of the E-site tRNA. This Staphylococcus aureus (strain USA300) protein is Small ribosomal subunit protein uS7.